The primary structure comprises 953 residues: ABC transporter A family member 11 (953 aa).

6 helical membrane-spanning segments follow: residues 33 to 53 (CLQIFSSFFFILLIFCIEEAM), 230 to 250 (GPVFFLAFSMFGFVLQLGALV), 277 to 297 (TWEGILTLVSSLFLVLFGMIF), 307 to 327 (FVLVFLLFLLFQFNMIGLAFA), 341 to 361 (VGFLVFLIGFITQFVSATGFP), and 417 to 437 (VISINIIYQWLLGTFLFWFVL). The region spanning 519–764 (VQIHGLAKTY…FGTGFVATVS (246 aa)) is the ABC transporter domain. Position 565-572 (565-572 (GPNGAGKT)) interacts with ATP.

This sequence belongs to the ABC transporter superfamily. ABCA family. CPR flippase (TC 3.A.1.211) subfamily.

The protein localises to the membrane. The polypeptide is ABC transporter A family member 11 (ABCA11) (Arabidopsis thaliana (Mouse-ear cress)).